The sequence spans 118 residues: MARIAGVNIPVHKHTVIGLTSIYGIGKTRAQQICQSCKVDPTVKIKDLSEEQIETLRTEVAKFTVEGDLRREVSMDIKRLMDLGCFRGRRHRRSLPVRGQRTKTNARTRKGPRKPIKA.

Residues 91–118 (HRRSLPVRGQRTKTNARTRKGPRKPIKA) are disordered.

This sequence belongs to the universal ribosomal protein uS13 family. Part of the 30S ribosomal subunit. Forms a loose heterodimer with protein S19. Forms two bridges to the 50S subunit in the 70S ribosome.

Located at the top of the head of the 30S subunit, it contacts several helices of the 16S rRNA. In the 70S ribosome it contacts the 23S rRNA (bridge B1a) and protein L5 of the 50S subunit (bridge B1b), connecting the 2 subunits; these bridges are implicated in subunit movement. Contacts the tRNAs in the A and P-sites. This chain is Small ribosomal subunit protein uS13, found in Francisella philomiragia subsp. philomiragia (strain ATCC 25017 / CCUG 19701 / FSC 153 / O#319-036).